Reading from the N-terminus, the 392-residue chain is Probable protein phosphatase 2C 29 (392 aa).

Residues 44–353 (DYSVAVAQAN…DDITVVVLFL (310 aa)) form the PPM-type phosphatase domain. Mn(2+)-binding residues include aspartate 75, glycine 76, aspartate 285, and aspartate 344. Residues 360–392 (AGRGDEIDGTDGPVDVFSLSPDDREDPTRPVLR) form a disordered region.

It belongs to the PP2C family. Mg(2+) is required as a cofactor. It depends on Mn(2+) as a cofactor.

It catalyses the reaction O-phospho-L-seryl-[protein] + H2O = L-seryl-[protein] + phosphate. It carries out the reaction O-phospho-L-threonyl-[protein] + H2O = L-threonyl-[protein] + phosphate. The polypeptide is Probable protein phosphatase 2C 29 (Oryza sativa subsp. japonica (Rice)).